A 719-amino-acid chain; its full sequence is ATP-dependent RNA helicase p62 (719 aa).

A disordered region spans residues 94 to 234 (AQSQRAFRDS…GSQDLPMRPV (141 aa)). Composition is skewed to basic and acidic residues over residues 99–108 (AFRDSSKPDS) and 137–171 (EEIKIEGVMAPHDRDFGHSGRGGRGGDRGGDDRRG). The segment covering 172–188 (GGGGGNRFGGGGGGGDY) has biased composition (gly residues). Basic and acidic residues predominate over residues 194-205 (GRVEKRRDDRGG). A compositionally biased stretch (gly residues) spans 206-226 (GNRFGGGGGFGDRRGGGGGGS). The short motif at 281-309 (QDFSEVHLPDYVMKEIRRQGYKAPTAIQA) is the Q motif element. One can recognise a Helicase ATP-binding domain in the interval 312 to 487 (WPIAMSGSNF…EDFLGNYIQI (176 aa)). ATP is bound at residue 325-332 (AKTGSGKT). Positions 435–438 (DEAD) match the DEAD box motif. The Helicase C-terminal domain maps to 519–664 (LLSDIYDTSE…EINPALENLA (146 aa)). The interval 689–719 (GGGFKKGSLSNGRGFGGGGGGGGEGRHSRFD) is disordered. The span at 701 to 711 (RGFGGGGGGGG) shows a compositional bias: gly residues.

This sequence belongs to the DEAD box helicase family. DDX5/DBP2 subfamily. As to quaternary structure, interacts with Fmr1 to form the RNA-induced silencing complex (RISC), a ribonucleoprotein (RNP) complex involved in translation regulation, other components of the complex are RpL5, RpL11, AGO2 and Dcr-1.

It localises to the nucleus. The protein localises to the nucleolus. The protein resides in the cytoplasm. It is found in the cytosol. It catalyses the reaction ATP + H2O = ADP + phosphate + H(+). In terms of biological role, as an RNA helicase, unwinds RNA and alters RNA structures through ATP binding and hydrolysis. Involved in multiple cellular processes, including pre-mRNA splicing, alternative splicing, rRNA processing and miRNA processing, as well as transcription regulation. Plays a role in innate immunity. Specifically restricts bunyavirus infection, including Rift Valley fever virus (RVFV) or La Crosse virus (LACV), but not vesicular stomatitis virus (VSV), in an interferon- and DROSHA-independent manner. In Drosophila melanogaster (Fruit fly), this protein is ATP-dependent RNA helicase p62 (Rm62).